The following is a 416-amino-acid chain: 2,3-bisphosphoglycerate-independent phosphoglycerate mutase (416 aa).

This sequence belongs to the BPG-independent phosphoglycerate mutase family. A-PGAM subfamily.

The enzyme catalyses (2R)-2-phosphoglycerate = (2R)-3-phosphoglycerate. It participates in carbohydrate degradation; glycolysis; pyruvate from D-glyceraldehyde 3-phosphate: step 3/5. Functionally, catalyzes the interconversion of 2-phosphoglycerate and 3-phosphoglycerate. This chain is 2,3-bisphosphoglycerate-independent phosphoglycerate mutase, found in Ignicoccus hospitalis (strain KIN4/I / DSM 18386 / JCM 14125).